We begin with the raw amino-acid sequence, 101 residues long: NADH-quinone oxidoreductase subunit K (101 aa).

3 helical membrane passes run 4-24 (LSHF…GIFL), 30-50 (IVLL…FIAF), and 61-81 (VFVF…LAIL).

This sequence belongs to the complex I subunit 4L family. As to quaternary structure, NDH-1 is composed of 14 different subunits. Subunits NuoA, H, J, K, L, M, N constitute the membrane sector of the complex.

Its subcellular location is the cell inner membrane. It carries out the reaction a quinone + NADH + 5 H(+)(in) = a quinol + NAD(+) + 4 H(+)(out). Functionally, NDH-1 shuttles electrons from NADH, via FMN and iron-sulfur (Fe-S) centers, to quinones in the respiratory chain. The immediate electron acceptor for the enzyme in this species is believed to be ubiquinone. Couples the redox reaction to proton translocation (for every two electrons transferred, four hydrogen ions are translocated across the cytoplasmic membrane), and thus conserves the redox energy in a proton gradient. The protein is NADH-quinone oxidoreductase subunit K of Thiobacillus denitrificans (strain ATCC 25259 / T1).